Here is a 654-residue protein sequence, read N- to C-terminus: Tumor necrosis factor alpha-induced protein 2 (654 aa).

2 disordered regions span residues 1–38 (MSEA…KKSK) and 50–78 (GKKK…PPPT). The span at 28-38 (KKKKEKKKKSK) shows a compositional bias: basic residues.

The protein belongs to the SEC6 family.

Functionally, may play a role as a mediator of inflammation and angiogenesis. In Homo sapiens (Human), this protein is Tumor necrosis factor alpha-induced protein 2 (TNFAIP2).